The primary structure comprises 252 residues: Hydroxyacylglutathione hydrolase (252 aa).

7 residues coordinate Zn(2+): H54, H56, D58, H59, H111, D128, and H166.

Belongs to the metallo-beta-lactamase superfamily. Glyoxalase II family. Monomer. Zn(2+) serves as cofactor.

It carries out the reaction an S-(2-hydroxyacyl)glutathione + H2O = a 2-hydroxy carboxylate + glutathione + H(+). It participates in secondary metabolite metabolism; methylglyoxal degradation; (R)-lactate from methylglyoxal: step 2/2. In terms of biological role, thiolesterase that catalyzes the hydrolysis of S-D-lactoyl-glutathione to form glutathione and D-lactic acid. The protein is Hydroxyacylglutathione hydrolase of Vibrio parahaemolyticus serotype O3:K6 (strain RIMD 2210633).